Reading from the N-terminus, the 422-residue chain is Probable metallocarboxypeptidase A (422 aa).

Positions M1–A17 are cleaved as a signal peptide. A propeptide spans A18–P112 (activation peptide). Positions S119–V419 constitute a Peptidase M14 domain. H179 and E182 together coordinate Zn(2+). Substrate-binding positions include H179 to E182, R237, and N254 to R255. C248 and C271 are joined by a disulfide. H309 lines the Zn(2+) pocket. A substrate-binding site is contributed by S310–Y311. E385 functions as the Proton donor/acceptor in the catalytic mechanism.

It belongs to the peptidase M14 family. Requires Zn(2+) as cofactor.

Its subcellular location is the secreted. Its function is as follows. Extracellular metalloprotease that contributes to pathogenicity. The sequence is that of Probable metallocarboxypeptidase A (MCPA) from Arthroderma benhamiae (strain ATCC MYA-4681 / CBS 112371) (Trichophyton mentagrophytes).